A 302-amino-acid chain; its full sequence is MEKEKLIEEINRLKEERNAIIMAHNYQLPEIQDIADFLGDSLELARKAVNIDADVIVFAGVDFMAETAKILNPEKTVLLPTPRATCAMANMLTIKHIIEAKKKYPDAPVVLYVNSSAEAKAYADVTVTSANAAKIVGKLDSDVVIFGPDKNLAHYVAKVTGKKVIPVPPNGHCYVHRKFTLEDVERARKLYPNAKLMVHPECEPEVQEQADIIVSTGGMIKRACEHDEWVVFTEREMVCRLQKLYPSKKFYPAREDATCIGMKAITLNHIYESLRDMKYRVEVPAEIAEKARKAIERMLEMS.

Residues H24 and S41 each coordinate iminosuccinate. C86 is a binding site for [4Fe-4S] cluster. Residues 112 to 114 (YVN) and S129 contribute to the iminosuccinate site. Residue C173 coordinates [4Fe-4S] cluster. Residues 199 to 201 (HPE) and T216 contribute to the iminosuccinate site. [4Fe-4S] cluster is bound at residue C259.

Belongs to the quinolinate synthase family. Type 2 subfamily. [4Fe-4S] cluster is required as a cofactor.

The protein localises to the cytoplasm. It carries out the reaction iminosuccinate + dihydroxyacetone phosphate = quinolinate + phosphate + 2 H2O + H(+). The protein operates within cofactor biosynthesis; NAD(+) biosynthesis; quinolinate from iminoaspartate: step 1/1. Its function is as follows. Catalyzes the condensation of iminoaspartate with dihydroxyacetone phosphate to form quinolinate. The protein is Quinolinate synthase of Thermococcus kodakarensis (strain ATCC BAA-918 / JCM 12380 / KOD1) (Pyrococcus kodakaraensis (strain KOD1)).